We begin with the raw amino-acid sequence, 210 residues long: PEP-dependent dihydroxyacetone kinase, ADP-binding subunit DhaL (210 aa).

In terms of domain architecture, DhaL spans 6–206; it reads TQIVNWLTRC…VMFMMQMLAL (201 aa). Residues D30, D35, and D37 each coordinate Mg(2+). Residues 38-41, 79-80, G121, M130, R178, and 191-193 contribute to the ADP site; these read HGLN, AS, and DPG.

In terms of assembly, homodimer. The dihydroxyacetone kinase complex is composed of a homodimer of DhaM, a homodimer of DhaK and the subunit DhaL. DhaL also forms a complex with DhaR. Requires Mg(2+) as cofactor.

The protein localises to the cytoplasm. The enzyme catalyses dihydroxyacetone + phosphoenolpyruvate = dihydroxyacetone phosphate + pyruvate. It functions in the pathway polyol metabolism; glycerol degradation. Its function is as follows. ADP-binding subunit of the dihydroxyacetone kinase, which is responsible for the phosphoenolpyruvate (PEP)-dependent phosphorylation of dihydroxyacetone. DhaL-ADP is converted to DhaL-ATP via a phosphoryl group transfer from DhaM and transmits it to dihydroxyacetone bound to DhaK. DhaL also acts as coactivator of the transcription activator DhaR by binding to the sensor domain of DhaR. In the presence of dihydroxyacetone, DhaL-ADP displaces DhaK and stimulates DhaR activity. In the absence of dihydroxyacetone, DhaL-ADP is converted by the PTS to DhaL-ATP, which does not bind to DhaR. This is PEP-dependent dihydroxyacetone kinase, ADP-binding subunit DhaL from Escherichia coli (strain K12).